The primary structure comprises 87 residues: MENEAGQLVDLYVPRKCSATNRIIQAKDHASVQINVCAVDAEGRQIPGEKTTYAISGFVRSKGESDDCINRLTTQDGLLEGVWSYQR.

Methionine 1 carries the N-acetylmethionine modification.

Belongs to the eukaryotic ribosomal protein eS21 family. Component of the small ribosomal subunit (SSU). Mature yeast ribosomes consist of a small (40S) and a large (60S) subunit. The 40S small subunit contains 1 molecule of ribosomal RNA (18S rRNA) and at least 33 different proteins. The large 60S subunit contains 3 rRNA molecules (25S, 5.8S and 5S rRNA) and at least 46 different proteins. Interacts with uS2A and uS2B, strongest interaction is with uS2B.

It is found in the cytoplasm. The protein resides in the nucleus. In terms of biological role, component of the ribosome, a large ribonucleoprotein complex responsible for the synthesis of proteins in the cell. The small ribosomal subunit (SSU) binds messenger RNAs (mRNAs) and translates the encoded message by selecting cognate aminoacyl-transfer RNA (tRNA) molecules. The large subunit (LSU) contains the ribosomal catalytic site termed the peptidyl transferase center (PTC), which catalyzes the formation of peptide bonds, thereby polymerizing the amino acids delivered by tRNAs into a polypeptide chain. The nascent polypeptides leave the ribosome through a tunnel in the LSU and interact with protein factors that function in enzymatic processing, targeting, and the membrane insertion of nascent chains at the exit of the ribosomal tunnel. eS21 is required for the processing of the 20S rRNA-precursor to mature 18S rRNA in a late step of the maturation of 40S ribosomal subunits. Has a physiological role leading to 18S rRNA stability. This is Small ribosomal subunit protein eS21 (rps21) from Schizosaccharomyces pombe (strain 972 / ATCC 24843) (Fission yeast).